A 486-amino-acid polypeptide reads, in one-letter code: Arginine deiminase (486 aa).

Cys-476 (amidino-cysteine intermediate) is an active-site residue.

This sequence belongs to the arginine deiminase family.

The protein localises to the cytoplasm. It carries out the reaction L-arginine + H2O = L-citrulline + NH4(+). It functions in the pathway amino-acid degradation; L-arginine degradation via ADI pathway; carbamoyl phosphate from L-arginine: step 1/2. Involved in the arginine deiminase pathway of fermentative arginine utilization. This chain is Arginine deiminase (arcA), found in Halobacterium salinarum (strain ATCC 29341 / DSM 671 / R1).